The sequence spans 86 residues: Probable oxaloacetate decarboxylase gamma chain 1 (86 aa).

Residues 11–33 (AATLMVTGMAVVFLFLTLLVYLV) traverse the membrane as a helical segment.

It belongs to the OadG family. In terms of assembly, heterotrimer of an alpha, a beta and a gamma subunit. It depends on Na(+) as a cofactor.

The protein resides in the cell membrane. It catalyses the reaction oxaloacetate + 2 Na(+)(in) + H(+) = pyruvate + 2 Na(+)(out) + CO2. Its function is as follows. Catalyzes the decarboxylation of oxaloacetate coupled to Na(+) translocation. The chain is Probable oxaloacetate decarboxylase gamma chain 1 (oadG1) from Vibrio cholerae serotype O1 (strain ATCC 39315 / El Tor Inaba N16961).